The primary structure comprises 296 residues: Protoheme IX farnesyltransferase (296 aa).

The Cytoplasmic segment spans residues 1–9 (MIFKQYLQV). Residues 10 to 28 (TKPGIIFGNLISVIGGFLL) form a helical membrane-spanning segment. Over 29–37 (ASKGSIDYP) the chain is Periplasmic. The helical transmembrane segment at 38–56 (LFIYTLVGVSLVVASGCVF) threads the bilayer. The Cytoplasmic portion of the chain corresponds to 57-78 (NNYIDRDIDRKMERTKNRVLVK). Residues 79-97 (GLISPAVSLVYATLLGIAG) traverse the membrane as a helical segment. Residues 98-107 (FMLLWFGANP) are Periplasmic-facing. Residues 108 to 126 (LACWLGVMGFVVYVGVYSL) form a helical membrane-spanning segment. Residues 127 to 197 (YMKRHSVYGT…YQAANIPVLP (71 aa)) lie on the Cytoplasmic side of the membrane. The helical transmembrane segment at 198–216 (VVKGISVAKNHITLYIIAF) threads the bilayer. The Periplasmic portion of the chain corresponds to 217–228 (AVATLMLSLGGY). A helical transmembrane segment spans residues 229 to 247 (AGYKYLVVAAAVSVWWLGM). Residues 248–268 (ALRGYKVADDRIWARKLFGFS) are Cytoplasmic-facing. The helical transmembrane segment at 269-287 (IIAITALSVMMSVDFMVPD) threads the bilayer. At 288 to 296 (SHTLLAAVW) the chain is on the periplasmic side.

This sequence belongs to the UbiA prenyltransferase family. Protoheme IX farnesyltransferase subfamily.

It localises to the cell inner membrane. It catalyses the reaction heme b + (2E,6E)-farnesyl diphosphate + H2O = Fe(II)-heme o + diphosphate. The protein operates within porphyrin-containing compound metabolism; heme O biosynthesis; heme O from protoheme: step 1/1. Converts heme B (protoheme IX) to heme O by substitution of the vinyl group on carbon 2 of heme B porphyrin ring with a hydroxyethyl farnesyl side group. This chain is Protoheme IX farnesyltransferase, found in Escherichia coli O1:K1 / APEC.